Here is a 398-residue protein sequence, read N- to C-terminus: Protein trichome birefringence-like 45 (398 aa).

The chain crosses the membrane as a helical; Signal-anchor for type II membrane protein span at residues 1 to 21 (MAAVQCLTFLFLFLLQNATSA). The GDS motif motif lies at 131–133 (GDS). The short motif at 375–389 (DCSHWCLPGLPDTWN) is the DCXHWCLPGXXDXWN motif element.

This sequence belongs to the PC-esterase family. TBL subfamily.

The protein resides in the membrane. Functionally, may act as a bridging protein that binds pectin and other cell wall polysaccharides. Probably involved in maintaining esterification of pectins. May be involved in the specific O-acetylation of cell wall polymers. This chain is Protein trichome birefringence-like 45 (TBL45), found in Arabidopsis thaliana (Mouse-ear cress).